A 529-amino-acid chain; its full sequence is uncharacterized protein (529 aa).

To M.jannaschii MJ1451.

This is an uncharacterized protein from Methanothermobacter thermautotrophicus (strain ATCC 29096 / DSM 1053 / JCM 10044 / NBRC 100330 / Delta H) (Methanobacterium thermoautotrophicum).